The primary structure comprises 178 residues: Adenine phosphoribosyltransferase (178 aa).

The protein belongs to the purine/pyrimidine phosphoribosyltransferase family. Homodimer.

The protein localises to the cytoplasm. The enzyme catalyses AMP + diphosphate = 5-phospho-alpha-D-ribose 1-diphosphate + adenine. It functions in the pathway purine metabolism; AMP biosynthesis via salvage pathway; AMP from adenine: step 1/1. Its function is as follows. Catalyzes a salvage reaction resulting in the formation of AMP, that is energically less costly than de novo synthesis. This chain is Adenine phosphoribosyltransferase, found in Mycoplasmoides gallisepticum (strain R(low / passage 15 / clone 2)) (Mycoplasma gallisepticum).